A 161-amino-acid chain; its full sequence is Troponin C, slow skeletal and cardiac muscles (161 aa).

An N-acetylmethionine modification is found at Met1. EF-hand domains lie at 16 to 51, 52 to 87, 92 to 127, and 128 to 161; these read QKNE…LGQN, PTPE…CMKD, KTEE…TGET, and ITED…KGVE. The Ca(2+) site is built by Asp65, Asp67, Ser69, Thr71, Asp105, Asn107, Asp109, Tyr111, Glu116, Asn143, Asp145, Arg147, and Glu152.

This sequence belongs to the troponin C family.

In terms of biological role, troponin is the central regulatory protein of striated muscle contraction. Tn consists of three components: Tn-I which is the inhibitor of actomyosin ATPase, Tn-T which contains the binding site for tropomyosin and Tn-C. The binding of calcium to Tn-C abolishes the inhibitory action of Tn on actin filaments. This chain is Troponin C, slow skeletal and cardiac muscles (TNNC1), found in Coturnix japonica (Japanese quail).